The chain runs to 238 residues: ATP synthase subunit a (238 aa).

5 helical membrane passes run 15–35, 76–96, 111–131, 167–187, and 208–230; these read IFNLTMLAMTLLIVGVIFVFI, YSLFFLCLFLFMVIANNLGLM, PTANLQYDLTLSFLVILLTHI, LALRIFGNIFAGEVMTSLLLL, and AFSVFISCIQAYVFTLLTSVYLG.

This sequence belongs to the ATPase A chain family. As to quaternary structure, F-type ATPases have 2 components, CF(1) - the catalytic core - and CF(0) - the membrane proton channel. CF(1) has five subunits: alpha(3), beta(3), gamma(1), delta(1), epsilon(1). CF(0) has three main subunits: a(1), b(2) and c(9-12). The alpha and beta chains form an alternating ring which encloses part of the gamma chain. CF(1) is attached to CF(0) by a central stalk formed by the gamma and epsilon chains, while a peripheral stalk is formed by the delta and b chains.

The protein resides in the cell membrane. Functionally, key component of the proton channel; it plays a direct role in the translocation of protons across the membrane. The sequence is that of ATP synthase subunit a from Streptococcus pneumoniae (strain ATCC BAA-255 / R6).